Reading from the N-terminus, the 852-residue chain is MKDFLEDYKKSVLERKSEGIPPLPLNAKQVEAVVEILMKDPTNAAFAKELLIHRVSPGVDEGAKVKAEFLAQLSQKKLECPHISALEATTLLGTMLGGYNVEPLIVGLESQDKNIAKESAKALKTTLLVYGSFDKIAAMSKTNALAKEVLESWANAEWFLNKEPLNECIEACVFKIDGETNTDDLSPASDAFTRSDIPLHAKAMLKNRIENYEQRIEAIKTKGVPVAYVGDVVGTGSSRKSATNSIMWHFGKDIPFVPNKRSGGIVIGGVIAPIFFATCEDSGALPIVADVKDLKEGDIIKIYPYKGEITLNDKVVSTFKLEPETLLDEVRASGRIPLIIGRGLTNKARKFLGLGESEAFKKPSAPKSDAKGYTLAQKIVGHACGVKGILPGAYCEPKVTTVGSQDTTGAMTRDEVKELASLKFDAPFVLQSFCHTAAYPKPSDVSLHATLPGFITQRGGVALHPGDGVIHTWLNRMGLPDTLGTGGDSHTRFPLGISFPAGSGLVAFAAVTGTMPLNMPESVLVRFKGEMNPGITLRDLVNAIPYYAIKKGLLTVEKKGKINVFNGRILEIEGLPDIKMEQAFELSDASAERSAAACVVRLNKEPMIEYLKSNIKLIDEMIASGYEDKETLKKRRDAMQAWVDKPVLLEPDSNAQYAAVIEIDVAEITEPILACPNDPDDVATLSEVLADTTGKRPHAIDEVFIGSCMTNIGHFRAFGEIVKNAPPSQARLWVVPPSKMDEQELINEGYYAIFGAAGARTEVPGCSLCMGNQARVRDNAVVFSTSTRNFDNRMGRGAKVYLGSAELGAACALLGRIPTKEEYMNLVSEKLESQKDKIYRYMNFNLMENFRL.

Substrate-binding positions include arginine 194, serine 237–arginine 239, glutamine 405–threonine 407, and serine 489. [4Fe-4S] cluster-binding residues include cysteine 708, cysteine 766, and cysteine 769. Residues arginine 788 and arginine 793 each contribute to the substrate site.

This sequence belongs to the aconitase/IPM isomerase family. In terms of assembly, monomer. It depends on [4Fe-4S] cluster as a cofactor.

It catalyses the reaction citrate = D-threo-isocitrate. The enzyme catalyses (2S,3R)-3-hydroxybutane-1,2,3-tricarboxylate = 2-methyl-cis-aconitate + H2O. It functions in the pathway carbohydrate metabolism; tricarboxylic acid cycle; isocitrate from oxaloacetate: step 2/2. Its pathway is organic acid metabolism; propanoate degradation. Functionally, involved in the catabolism of short chain fatty acids (SCFA) via the tricarboxylic acid (TCA)(acetyl degradation route) and probably via the 2-methylcitrate cycle I (propionate degradation route). Catalyzes the reversible isomerization of citrate to isocitrate via cis-aconitate. Catalyzes the hydration of 2-methyl-cis-aconitate to yield (2R,3S)-2-methylisocitrate. The apo form of AcnB functions as a RNA-binding regulatory protein. The chain is Aconitate hydratase B (acnB) from Helicobacter pylori (strain J99 / ATCC 700824) (Campylobacter pylori J99).